The following is a 134-amino-acid chain: Phosphoribosyl-AMP cyclohydrolase (134 aa).

Mg(2+) is bound at residue D78. A Zn(2+)-binding site is contributed by C79. Mg(2+)-binding residues include D80 and D82. Residues C96 and C103 each coordinate Zn(2+).

It belongs to the PRA-CH family. In terms of assembly, homodimer. The cofactor is Mg(2+). Zn(2+) is required as a cofactor.

It localises to the cytoplasm. It catalyses the reaction 1-(5-phospho-beta-D-ribosyl)-5'-AMP + H2O = 1-(5-phospho-beta-D-ribosyl)-5-[(5-phospho-beta-D-ribosylamino)methylideneamino]imidazole-4-carboxamide. It functions in the pathway amino-acid biosynthesis; L-histidine biosynthesis; L-histidine from 5-phospho-alpha-D-ribose 1-diphosphate: step 3/9. Its function is as follows. Catalyzes the hydrolysis of the adenine ring of phosphoribosyl-AMP. This chain is Phosphoribosyl-AMP cyclohydrolase, found in Cupriavidus taiwanensis (strain DSM 17343 / BCRC 17206 / CCUG 44338 / CIP 107171 / LMG 19424 / R1) (Ralstonia taiwanensis (strain LMG 19424)).